The following is a 238-amino-acid chain: tRNA (guanine-N(7)-)-methyltransferase (238 aa).

Residues E70, D95, D122, and D145 each coordinate S-adenosyl-L-methionine. Residue D145 is part of the active site. Substrate is bound by residues K149, D181, and 216–219 (TKFE).

It belongs to the class I-like SAM-binding methyltransferase superfamily. TrmB family.

The catalysed reaction is guanosine(46) in tRNA + S-adenosyl-L-methionine = N(7)-methylguanosine(46) in tRNA + S-adenosyl-L-homocysteine. The protein operates within tRNA modification; N(7)-methylguanine-tRNA biosynthesis. Catalyzes the formation of N(7)-methylguanine at position 46 (m7G46) in tRNA. The chain is tRNA (guanine-N(7)-)-methyltransferase from Neisseria meningitidis serogroup B (strain ATCC BAA-335 / MC58).